The chain runs to 88 residues: Small ribosomal subunit protein bS20 (88 aa).

This sequence belongs to the bacterial ribosomal protein bS20 family.

Binds directly to 16S ribosomal RNA. This Methylocella silvestris (strain DSM 15510 / CIP 108128 / LMG 27833 / NCIMB 13906 / BL2) protein is Small ribosomal subunit protein bS20.